The sequence spans 555 residues: O-fucosyltransferase 20 (555 aa).

The Cytoplasmic portion of the chain corresponds to 1–58 (MALPKNGGNSSSTKKKVSYISVPSQIINSLSSSSLQSLLVSPKKSSRCTNRFSYRNPR). A helical; Signal-anchor for type II membrane protein transmembrane segment spans residues 59–79 (IWFLTLFLVSLFGMLKLGLNV). The Lumenal portion of the chain corresponds to 80-555 (DPISLPFSRY…MCSDRRQQQQ (476 aa)). Residues 110-130 (KNDTQSSSSSEHRKNETLPTE) form a disordered region. N-linked (GlcNAc...) asparagine glycosylation is found at Asn-111 and Asn-124. 330–332 (HLR) is a substrate binding site. 2 N-linked (GlcNAc...) asparagine glycosylation sites follow: Asn-371 and Asn-503. The disordered stretch occupies residues 525-555 (QPELRTGRGGKDVTKHPVSECMCSDRRQQQQ). Over residues 529-555 (RTGRGGKDVTKHPVSECMCSDRRQQQQ) the composition is skewed to basic and acidic residues.

Belongs to the glycosyltransferase GT106 family. Highly expressed in embryogenic microspore and in vegetative tissues.

It localises to the golgi apparatus membrane. It participates in glycan metabolism. Functionally, may play a role in the biosynthesis of matrix polysaccharides and contribute to the biomechanics and development of the plant cell wall. The protein is O-fucosyltransferase 20 of Brassica napus (Rape).